The sequence spans 162 residues: NADH-quinone oxidoreductase subunit I (162 aa).

2 4Fe-4S ferredoxin-type domains span residues 52–82 (LRRYPNGEERCIACKLCEAICPAQAITIEAG) and 93–122 (TRYDIDMVKCIYCGMCQEACPVDAIVEGPN). [4Fe-4S] cluster-binding residues include Cys-62, Cys-65, Cys-68, Cys-72, Cys-102, Cys-105, Cys-108, and Cys-112.

The protein belongs to the complex I 23 kDa subunit family. NDH-1 is composed of 14 different subunits. Subunits NuoA, H, J, K, L, M, N constitute the membrane sector of the complex. [4Fe-4S] cluster is required as a cofactor.

It localises to the cell inner membrane. The enzyme catalyses a quinone + NADH + 5 H(+)(in) = a quinol + NAD(+) + 4 H(+)(out). Its function is as follows. NDH-1 shuttles electrons from NADH, via FMN and iron-sulfur (Fe-S) centers, to quinones in the respiratory chain. The immediate electron acceptor for the enzyme in this species is believed to be ubiquinone. Couples the redox reaction to proton translocation (for every two electrons transferred, four hydrogen ions are translocated across the cytoplasmic membrane), and thus conserves the redox energy in a proton gradient. The chain is NADH-quinone oxidoreductase subunit I from Methylobacterium radiotolerans (strain ATCC 27329 / DSM 1819 / JCM 2831 / NBRC 15690 / NCIMB 10815 / 0-1).